The sequence spans 151 residues: Globin CTT-VIII (151 aa).

In terms of domain architecture, Globin spans 4-148 (PMSADQLALF…MFFYILHALE (145 aa)). 2 residues coordinate heme b: H62 and H97.

This sequence belongs to the globin family. In terms of assembly, homodimer.

This Chironomus thummi thummi (Midge) protein is Globin CTT-VIII (CTT-8).